A 409-amino-acid polypeptide reads, in one-letter code: N-acetylglucosamine-6-phosphate deacetylase (409 aa).

A divalent metal cation is bound at residue Glu-143. 154 to 155 (AH) provides a ligand contact to substrate. The a divalent metal cation site is built by His-211 and His-232. Substrate contacts are provided by residues 235–236 (NA), Arg-243, and 269–272 (DGTH). The active-site Proton donor/acceptor is Asp-294. 328-330 (LSG) serves as a coordination point for substrate.

The protein belongs to the metallo-dependent hydrolases superfamily. NagA family. A divalent metal cation serves as cofactor.

The enzyme catalyses N-acetyl-D-glucosamine 6-phosphate + H2O = D-glucosamine 6-phosphate + acetate. The protein operates within amino-sugar metabolism; N-acetylneuraminate degradation. Its function is as follows. Hydrolyzes the N-glycolyl group from N-glycolylglucosamine 6-phosphate (GlcNGc-6-P) in the N-glycolylneuraminic acid (Neu5Gc) degradation pathway. Although human is not able to catalyze formation of Neu5Gc due to the inactive CMAHP enzyme, Neu5Gc is present in food and must be degraded. The chain is N-acetylglucosamine-6-phosphate deacetylase (AMDHD2) from Homo sapiens (Human).